The following is a 576-amino-acid chain: Sulfite reductase [NADPH] hemoprotein beta-component (576 aa).

The [4Fe-4S] cluster site is built by C435, C441, C480, and C484. Siroheme is bound at residue C484.

It belongs to the nitrite and sulfite reductase 4Fe-4S domain family. Alpha(8)-beta(8). The alpha component is a flavoprotein, the beta component is a hemoprotein. Requires siroheme as cofactor. It depends on [4Fe-4S] cluster as a cofactor.

The enzyme catalyses hydrogen sulfide + 3 NADP(+) + 3 H2O = sulfite + 3 NADPH + 4 H(+). It functions in the pathway sulfur metabolism; hydrogen sulfide biosynthesis; hydrogen sulfide from sulfite (NADPH route): step 1/1. Its function is as follows. Component of the sulfite reductase complex that catalyzes the 6-electron reduction of sulfite to sulfide. This is one of several activities required for the biosynthesis of L-cysteine from sulfate. In Yersinia pestis bv. Antiqua (strain Antiqua), this protein is Sulfite reductase [NADPH] hemoprotein beta-component.